We begin with the raw amino-acid sequence, 255 residues long: Small ribosomal subunit protein uS3c (255 aa).

Positions 51-124 (IRESSNTSYG…NKNQNKNTGQ (74 aa)) constitute a KH type-2 domain. A disordered region spans residues 96–121 (EKNRDKNKSNKNSALDQSVNKNQNKN). The span at 108–121 (SALDQSVNKNQNKN) shows a compositional bias: polar residues.

It belongs to the universal ribosomal protein uS3 family. Part of the 30S ribosomal subunit.

The protein localises to the plastid. It localises to the chloroplast. The sequence is that of Small ribosomal subunit protein uS3c (rps3) from Chaetosphaeridium globosum (Charophycean green alga).